Here is a 450-residue protein sequence, read N- to C-terminus: tRNA modification GTPase MnmE (450 aa).

Residues arginine 23, glutamate 80, and arginine 123 each contribute to the (6S)-5-formyl-5,6,7,8-tetrahydrofolate site. Residues 219–372 (GLHVVLAGKP…LRQRLLQLAG (154 aa)) form the TrmE-type G domain. Asparagine 229 is a K(+) binding site. Residues 229–234 (NVGKSS), 248–254 (TPIAGTT), 273–276 (DTAG), and 353–355 (SAR) each bind GTP. A Mg(2+)-binding site is contributed by serine 233. 3 residues coordinate K(+): threonine 248, isoleucine 250, and threonine 253. Threonine 254 contacts Mg(2+). Lysine 450 contributes to the (6S)-5-formyl-5,6,7,8-tetrahydrofolate binding site.

Belongs to the TRAFAC class TrmE-Era-EngA-EngB-Septin-like GTPase superfamily. TrmE GTPase family. As to quaternary structure, homodimer. Heterotetramer of two MnmE and two MnmG subunits. The cofactor is K(+).

The protein localises to the cytoplasm. In terms of biological role, exhibits a very high intrinsic GTPase hydrolysis rate. Involved in the addition of a carboxymethylaminomethyl (cmnm) group at the wobble position (U34) of certain tRNAs, forming tRNA-cmnm(5)s(2)U34. In Bordetella parapertussis (strain 12822 / ATCC BAA-587 / NCTC 13253), this protein is tRNA modification GTPase MnmE.